A 347-amino-acid polypeptide reads, in one-letter code: NADH-ubiquinone oxidoreductase chain 2 (347 aa).

Helical transmembrane passes span 3–23 (PPIF…VMTS), 25–45 (HWML…PILM), 59–79 (YFLT…INLL), 96–116 (ILMT…FWVP), 122–142 (IPLS…LSVL), 149–169 (INPN…GWGG), 178–198 (ILAY…LYNP), 201–221 (MILN…LFML), 237–257 (MPLI…LPPL), 274–294 (EMII…YFYM), and 325–345 (FLPP…MISI).

It belongs to the complex I subunit 2 family. As to quaternary structure, core subunit of respiratory chain NADH dehydrogenase (Complex I) which is composed of 45 different subunits. Interacts with TMEM242.

It is found in the mitochondrion inner membrane. The catalysed reaction is a ubiquinone + NADH + 5 H(+)(in) = a ubiquinol + NAD(+) + 4 H(+)(out). Functionally, core subunit of the mitochondrial membrane respiratory chain NADH dehydrogenase (Complex I) which catalyzes electron transfer from NADH through the respiratory chain, using ubiquinone as an electron acceptor. Essential for the catalytic activity and assembly of complex I. In Genetta servalina (Servaline genet), this protein is NADH-ubiquinone oxidoreductase chain 2.